Reading from the N-terminus, the 144-residue chain is Large ribosomal subunit protein uL15 (144 aa).

Positions 1–52 (MKLHTLKSTPGARVEKHRVGRGHAAGKGKQAGKGQSGQNKRHGHRLGFEGGQ) are disordered. Residues 15-26 (EKHRVGRGHAAG) are compositionally biased toward basic residues.

It belongs to the universal ribosomal protein uL15 family. Part of the 50S ribosomal subunit.

Functionally, binds to the 23S rRNA. This is Large ribosomal subunit protein uL15 from Mycoplasmopsis agalactiae (strain NCTC 10123 / CIP 59.7 / PG2) (Mycoplasma agalactiae).